A 388-amino-acid polypeptide reads, in one-letter code: Na(+)/H(+) antiporter NhaA (388 aa).

A run of 11 helical transmembrane segments spans residues 14-34 (GGII…SGFT), 59-79 (MLLW…GLEV), 95-115 (AFPV…YLAF), 125-145 (GWAI…ALLG), 154-174 (IFLM…IALF), 179-199 (LSMV…VLNL), 219-239 (VLKS…FIPL), 254-274 (VLHP…NAGV), 287-307 (ILPL…ISLF), 328-348 (IMAV…IASL), and 356-376 (ALIN…AVIG).

This sequence belongs to the NhaA Na(+)/H(+) (TC 2.A.33) antiporter family.

It localises to the cell inner membrane. It catalyses the reaction Na(+)(in) + 2 H(+)(out) = Na(+)(out) + 2 H(+)(in). Its function is as follows. Na(+)/H(+) antiporter that extrudes sodium in exchange for external protons. The sequence is that of Na(+)/H(+) antiporter NhaA from Citrobacter koseri (strain ATCC BAA-895 / CDC 4225-83 / SGSC4696).